The following is a 257-amino-acid chain: Ribosome-inactivating protein charybdin (257 aa).

E167 is an active-site residue. Cysteines 217 and 254 form a disulfide.

This sequence belongs to the ribosome-inactivating protein family. Type 1 RIP subfamily.

The catalysed reaction is Endohydrolysis of the N-glycosidic bond at one specific adenosine on the 28S rRNA.. In terms of biological role, inhibits translation in rabbit reticulocytes. This is Ribosome-inactivating protein charybdin from Drimia maritima (Sea squill).